We begin with the raw amino-acid sequence, 254 residues long: Type III pantothenate kinase (254 aa).

6 to 13 is a binding site for ATP; the sequence is DVGNTNTV. Substrate contacts are provided by residues tyrosine 100 and 107-110; that span reads GADR. The active-site Proton acceptor is the aspartate 109. Aspartate 129 is a binding site for K(+). Threonine 132 provides a ligand contact to ATP. Threonine 184 is a binding site for substrate.

This sequence belongs to the type III pantothenate kinase family. Homodimer. NH4(+) is required as a cofactor. The cofactor is K(+).

It localises to the cytoplasm. It carries out the reaction (R)-pantothenate + ATP = (R)-4'-phosphopantothenate + ADP + H(+). Its pathway is cofactor biosynthesis; coenzyme A biosynthesis; CoA from (R)-pantothenate: step 1/5. Its function is as follows. Catalyzes the phosphorylation of pantothenate (Pan), the first step in CoA biosynthesis. This is Type III pantothenate kinase from Anaeromyxobacter sp. (strain Fw109-5).